Here is a 220-residue protein sequence, read N- to C-terminus: VQ motif-containing protein 5 (220 aa).

The VQ motif lies at 49 to 57 (FKSLVQQLT). 2 disordered regions span residues 61 to 80 (PCDRLPQNIPKHQDIRPEPI) and 131 to 171 (HMMA…GASS). 2 stretches are compositionally biased toward polar residues: residues 133–150 (MAQSQPQDPTQSMPQSNG) and 157–171 (SWFNGSTQEMHGASS).

The protein localises to the nucleus. Its function is as follows. May function as negative regulator of plant defense. The sequence is that of VQ motif-containing protein 5 from Arabidopsis thaliana (Mouse-ear cress).